The primary structure comprises 292 residues: High-affinity heme uptake system protein IsdE (292 aa).

The N-terminal stretch at 1–19 is a signal peptide; that stretch reads MRIIKYLTILVISVVILTS. The N-palmitoyl cysteine moiety is linked to residue cysteine 20. Cysteine 20 is lipidated: S-diacylglycerol cysteine. One can recognise a Fe/B12 periplasmic-binding domain in the interval 35 to 291; sequence RIVPTTVALT…QLYDLFYKDK (257 aa). Heme is bound by residues valine 41, alanine 42, serine 60, tyrosine 61, methionine 78, and histidine 229.

This sequence belongs to the bacterial solute-binding protein 8 family. Requires heme b as cofactor.

It is found in the cell membrane. Its function is as follows. Involved in heme (porphyrin) scavenging. Binds Fe(2+) and Fe(3+) heme but the largest fraction is Fe(2+) heme. Functions as a high-affinity heme binding protein and probably has a role in relaying heme-iron from cell wall-anchored isd proteins receptors to the probable permease IsdF. The polypeptide is High-affinity heme uptake system protein IsdE (isdE) (Staphylococcus aureus (strain Mu3 / ATCC 700698)).